Reading from the N-terminus, the 503-residue chain is Cobyric acid synthase (503 aa).

The 190-residue stretch at 255–444 folds into the GATase cobBQ-type domain; the sequence is AIDVAVIRCP…MHDLFHNDAF (190 aa). The Nucleophile role is filled by C337. The active site involves H436.

Belongs to the CobB/CobQ family. CobQ subfamily.

It participates in cofactor biosynthesis; adenosylcobalamin biosynthesis. Its function is as follows. Catalyzes amidations at positions B, D, E, and G on adenosylcobyrinic A,C-diamide. NH(2) groups are provided by glutamine, and one molecule of ATP is hydrogenolyzed for each amidation. The polypeptide is Cobyric acid synthase (Geobacillus kaustophilus (strain HTA426)).